We begin with the raw amino-acid sequence, 399 residues long: 1-deoxy-D-xylulose 5-phosphate reductoisomerase (399 aa).

5 residues coordinate NADPH: T11, G12, S13, I14, and N125. K126 contributes to the 1-deoxy-D-xylulose 5-phosphate binding site. An NADPH-binding site is contributed by E127. D151 contacts Mn(2+). 1-deoxy-D-xylulose 5-phosphate-binding residues include S152, E153, S186, and H209. E153 contributes to the Mn(2+) binding site. G215 is an NADPH binding site. 4 residues coordinate 1-deoxy-D-xylulose 5-phosphate: S222, N227, K228, and E231. E231 lines the Mn(2+) pocket.

The protein belongs to the DXR family. Requires Mg(2+) as cofactor. Mn(2+) is required as a cofactor.

It carries out the reaction 2-C-methyl-D-erythritol 4-phosphate + NADP(+) = 1-deoxy-D-xylulose 5-phosphate + NADPH + H(+). Its pathway is isoprenoid biosynthesis; isopentenyl diphosphate biosynthesis via DXP pathway; isopentenyl diphosphate from 1-deoxy-D-xylulose 5-phosphate: step 1/6. Catalyzes the NADPH-dependent rearrangement and reduction of 1-deoxy-D-xylulose-5-phosphate (DXP) to 2-C-methyl-D-erythritol 4-phosphate (MEP). In Acinetobacter baumannii (strain SDF), this protein is 1-deoxy-D-xylulose 5-phosphate reductoisomerase.